The chain runs to 457 residues: Exodeoxyribonuclease 7 large subunit (457 aa).

Belongs to the XseA family. In terms of assembly, heterooligomer composed of large and small subunits.

The protein localises to the cytoplasm. The catalysed reaction is Exonucleolytic cleavage in either 5'- to 3'- or 3'- to 5'-direction to yield nucleoside 5'-phosphates.. Bidirectionally degrades single-stranded DNA into large acid-insoluble oligonucleotides, which are then degraded further into small acid-soluble oligonucleotides. The sequence is that of Exodeoxyribonuclease 7 large subunit from Escherichia coli O127:H6 (strain E2348/69 / EPEC).